A 578-amino-acid polypeptide reads, in one-letter code: GPI-anchor transamidase component PIGT (578 aa).

An N-terminal signal peptide occupies residues 1–21 (MAAAMPLALLVLLLLGPGGWC). Topologically, residues 22–525 (LAEPPRDSLR…NLPTPDFSMP (504 aa)) are lumenal. The N-linked (GlcNAc...) asparagine glycan is linked to N164. Disulfide bonds link C195–C272 and C226–C231. N291 and N327 each carry an N-linked (GlcNAc...) asparagine glycan. N461, D521, S523, and N527 together coordinate a 2-acyl-6-[6-phosphoethanolamine-alpha-D-mannosyl-(1-&gt;2)-6-phosphoethanolamine-alpha-D-mannosyl-(1-&gt;6)-2-phosphoethanolamine-alpha-D-mannosyl-(1-&gt;4)-alpha-D-glucosaminyl]-1-(1-radyl,2-acyl-sn-glycero-3-phospho)-1D-myo-inositol. Residues 526 to 548 (YNVICLTCTVVAVCYGSFYNLLT) traverse the membrane as a helical segment. The Cytoplasmic segment spans residues 549–578 (RTFHIEEPRTGGLAKRLANLIRRARGVPPL).

Belongs to the PIGT family. Heteropentamer. Part of the GPI-anchor transamidase complex, consisting of PIGK, PIGT, PIGS, PIGU and GAA1. In terms of processing, the disulfide bond between PIGK/GPI8 and PIGT is important for normal enzyme activity.

The protein localises to the endoplasmic reticulum membrane. It functions in the pathway glycolipid biosynthesis; glycosylphosphatidylinositol-anchor biosynthesis. In terms of biological role, component of the glycosylphosphatidylinositol-anchor (GPI-anchor) transamidase (GPI-T) complex that catalyzes the formation of the linkage between a proprotein and a GPI-anchor and participates in GPI anchored protein biosynthesis. May play a crucial role in GPI-T complex assembly in the luminal layer. Binds GPI-anchor. The protein is GPI-anchor transamidase component PIGT of Homo sapiens (Human).